Reading from the N-terminus, the 275-residue chain is Rhamnulose-1-phosphate aldolase (275 aa).

Residue Glu-117 is part of the active site. Zn(2+)-binding residues include His-141, His-143, and His-212.

It belongs to the aldolase class II family. RhaD subfamily. As to quaternary structure, homotetramer. The cofactor is Zn(2+).

The protein localises to the cytoplasm. It carries out the reaction L-rhamnulose 1-phosphate = (S)-lactaldehyde + dihydroxyacetone phosphate. It functions in the pathway carbohydrate degradation; L-rhamnose degradation; glycerone phosphate from L-rhamnose: step 3/3. Catalyzes the reversible cleavage of L-rhamnulose-1-phosphate to dihydroxyacetone phosphate (DHAP) and L-lactaldehyde. This is Rhamnulose-1-phosphate aldolase from Citrobacter koseri (strain ATCC BAA-895 / CDC 4225-83 / SGSC4696).